An 807-amino-acid polypeptide reads, in one-letter code: Probable E3 ubiquitin-protein ligase mug30 (807 aa).

In terms of domain architecture, HECT spans 453–807 (RNKDFRKALK…LLETNGFNIR (355 aa)). The active-site Glycyl thioester intermediate is Cys775.

The protein resides in the cytoplasm. It is found in the cytoskeleton. Its subcellular location is the microtubule organizing center. It localises to the spindle pole body. It carries out the reaction S-ubiquitinyl-[E2 ubiquitin-conjugating enzyme]-L-cysteine + [acceptor protein]-L-lysine = [E2 ubiquitin-conjugating enzyme]-L-cysteine + N(6)-ubiquitinyl-[acceptor protein]-L-lysine.. Its pathway is protein modification; protein ubiquitination. Probable E3 ubiquitin-protein ligase. Has a role in meiosis. The sequence is that of Probable E3 ubiquitin-protein ligase mug30 (mug30) from Schizosaccharomyces pombe (strain 972 / ATCC 24843) (Fission yeast).